The sequence spans 345 residues: Anthranilate phosphoribosyltransferase (345 aa).

5-phospho-alpha-D-ribose 1-diphosphate contacts are provided by residues Gly81, 84-85, Ser89, 91-94, 109-117, and Ala121; these read GD, NVST, and KHGNRAATS. An anthranilate-binding site is contributed by Gly81. Ser93 is a Mg(2+) binding site. Anthranilate is bound at residue Asn112. Anthranilate is bound at residue Arg167. Positions 226 and 227 each coordinate Mg(2+).

It belongs to the anthranilate phosphoribosyltransferase family. Homodimer. Mg(2+) serves as cofactor.

It catalyses the reaction N-(5-phospho-beta-D-ribosyl)anthranilate + diphosphate = 5-phospho-alpha-D-ribose 1-diphosphate + anthranilate. Its pathway is amino-acid biosynthesis; L-tryptophan biosynthesis; L-tryptophan from chorismate: step 2/5. Catalyzes the transfer of the phosphoribosyl group of 5-phosphorylribose-1-pyrophosphate (PRPP) to anthranilate to yield N-(5'-phosphoribosyl)-anthranilate (PRA). The sequence is that of Anthranilate phosphoribosyltransferase from Methylobacterium radiotolerans (strain ATCC 27329 / DSM 1819 / JCM 2831 / NBRC 15690 / NCIMB 10815 / 0-1).